The following is a 526-amino-acid chain: CTP synthase (526 aa).

The segment at 1 to 264 (MPQRFIVVTG…HKLIAKELDI (264 aa)) is amidoligase domain. A CTP-binding site is contributed by Ser-14. Ser-14 provides a ligand contact to UTP. ATP-binding positions include 15-20 (GIGKGI) and Asp-72. Positions 72 and 138 each coordinate Mg(2+). Residues 145 to 147 (DIE), 185 to 190 (KTKPTQ), and Lys-221 contribute to the CTP site. UTP contacts are provided by residues 185-190 (KTKPTQ) and Lys-221. The Glutamine amidotransferase type-1 domain occupies 282–526 (KIGIVGKYLG…VKAAGGKIND (245 aa)). L-glutamine is bound at residue Gly-342. Cys-369 serves as the catalytic Nucleophile; for glutamine hydrolysis. Residues 370-373 (LGMQ), Glu-393, and Arg-451 each bind L-glutamine. Residues His-499 and Glu-501 contribute to the active site.

The protein belongs to the CTP synthase family. As to quaternary structure, homotetramer.

It catalyses the reaction UTP + L-glutamine + ATP + H2O = CTP + L-glutamate + ADP + phosphate + 2 H(+). The enzyme catalyses L-glutamine + H2O = L-glutamate + NH4(+). The catalysed reaction is UTP + NH4(+) + ATP = CTP + ADP + phosphate + 2 H(+). The protein operates within pyrimidine metabolism; CTP biosynthesis via de novo pathway; CTP from UDP: step 2/2. Allosterically activated by GTP, when glutamine is the substrate; GTP has no effect on the reaction when ammonia is the substrate. The allosteric effector GTP functions by stabilizing the protein conformation that binds the tetrahedral intermediate(s) formed during glutamine hydrolysis. Inhibited by the product CTP, via allosteric rather than competitive inhibition. In terms of biological role, catalyzes the ATP-dependent amination of UTP to CTP with either L-glutamine or ammonia as the source of nitrogen. Regulates intracellular CTP levels through interactions with the four ribonucleotide triphosphates. In Thermosipho africanus (strain TCF52B), this protein is CTP synthase.